A 264-amino-acid polypeptide reads, in one-letter code: 3-methyl-2-oxobutanoate hydroxymethyltransferase (264 aa).

Mg(2+) is bound by residues Asp45 and Asp84. Residues 45–46 (DS), Asp84, and Lys112 each bind 3-methyl-2-oxobutanoate. Glu114 lines the Mg(2+) pocket. Glu181 acts as the Proton acceptor in catalysis.

Belongs to the PanB family. In terms of assembly, homodecamer; pentamer of dimers. Mg(2+) serves as cofactor.

The protein resides in the cytoplasm. It carries out the reaction 3-methyl-2-oxobutanoate + (6R)-5,10-methylene-5,6,7,8-tetrahydrofolate + H2O = 2-dehydropantoate + (6S)-5,6,7,8-tetrahydrofolate. It participates in cofactor biosynthesis; (R)-pantothenate biosynthesis; (R)-pantoate from 3-methyl-2-oxobutanoate: step 1/2. Catalyzes the reversible reaction in which hydroxymethyl group from 5,10-methylenetetrahydrofolate is transferred onto alpha-ketoisovalerate to form ketopantoate. This is 3-methyl-2-oxobutanoate hydroxymethyltransferase from Escherichia fergusonii (strain ATCC 35469 / DSM 13698 / CCUG 18766 / IAM 14443 / JCM 21226 / LMG 7866 / NBRC 102419 / NCTC 12128 / CDC 0568-73).